A 363-amino-acid chain; its full sequence is Tetraacyldisaccharide 4'-kinase (363 aa).

78–85 contributes to the ATP binding site; sequence TVGGNGKT.

This sequence belongs to the LpxK family.

It catalyses the reaction a lipid A disaccharide + ATP = a lipid IVA + ADP + H(+). It functions in the pathway glycolipid biosynthesis; lipid IV(A) biosynthesis; lipid IV(A) from (3R)-3-hydroxytetradecanoyl-[acyl-carrier-protein] and UDP-N-acetyl-alpha-D-glucosamine: step 6/6. Functionally, transfers the gamma-phosphate of ATP to the 4'-position of a tetraacyldisaccharide 1-phosphate intermediate (termed DS-1-P) to form tetraacyldisaccharide 1,4'-bis-phosphate (lipid IVA). The sequence is that of Tetraacyldisaccharide 4'-kinase from Wigglesworthia glossinidia brevipalpis.